A 1136-amino-acid polypeptide reads, in one-letter code: Unconventional myosin-Ib (1136 aa).

The region spanning 15–701 (IGVGDMVLLE…TLFKLEDLRK (687 aa)) is the Myosin motor domain. Residue serine 60 is modified to Phosphoserine. Position 108 to 115 (108 to 115 (GESGAGKT)) interacts with ATP. Lysine 287 is covalently cross-linked (Glycyl lysine isopeptide (Lys-Gly) (interchain with G-Cter in SUMO1); alternate). A Glycyl lysine isopeptide (Lys-Gly) (interchain with G-Cter in SUMO2); alternate cross-link involves residue lysine 287. The interval 578–600 (VATLMKNLQTKNPNYIRCIKPND) is actin-binding. 6 IQ domains span residues 704-733 (LEDL…SQIV), 728-748 (KKSQ…KRYQ), 750-779 (TKSS…QKRC), 779-808 (CKEA…EARN), 808-837 (NKHA…EARR), and 837-866 (RKHA…ANAG). Positions 952–1136 (KALYPSSVGQ…NNRLLEVAVP (185 aa)) constitute a TH1 domain.

Belongs to the TRAFAC class myosin-kinesin ATPase superfamily. Myosin family.

Motor protein that may participate in process critical to neuronal development and function such as cell migration, neurite outgrowth and vesicular transport. In Homo sapiens (Human), this protein is Unconventional myosin-Ib (MYO1B).